The sequence spans 208 residues: HTLV-1 basic zipper factor (208 aa).

A disordered region spans residues 59–93 (RLRWGPVGEEAPPRGETHRDRQRRAEEKRKRKRER). Basic and acidic residues predominate over residues 69–86 (APPRGETHRDRQRRAEEK). Short sequence motifs (nuclear localization signal) lie at residues 86–91 (KRKRKR), 115–119 (RRRRA), and 136–140 (RRERK). Residues 125 to 143 (DRARRKLEEEERRERKWRQ) show a composition bias toward basic and acidic residues. Positions 125 to 160 (DRARRKLEEEERRERKWRQTEQGAKQRSARKEKMTE) are disordered.

The protein belongs to the HTLV-1 HBZ protein family. In terms of assembly, interacts with host ATF4; this interaction inhibits viral RNA transcriptional activation by preventing ATF4 binding to Tax-responsive elements. Interacts with host CREB1; this interaction inhibits host CREB1 transcriptional activity. Interacts with host JUN, JUNB and JUND. Interacts with host EP300.

The protein resides in the host nucleus. Functionally, contributes to the regulation of viral RNA transcription by interacting with host proteins involved in transcriptional activation such as ATF4, or CREB1, and by inhibiting their activity. Additionally, HBZ suppresses host NF-kappa-B-driven transcription mediated by host RELA as well as transcription of some classical NF-kappa-B target genes, including IL8, IL2RA, IRF4, VCAM1, and VEGFA. This Human T-cell leukemia virus 1 (isolate Melanesia mel5 subtype C) (HTLV-1) protein is HTLV-1 basic zipper factor (HBZ).